Consider the following 413-residue polypeptide: Divalent metal cation transporter MntH (413 aa).

At 1–19 the chain is on the cytoplasmic side; sequence MTDNRVENSSGRAARKLRL. A helical membrane pass occupies residues 20-39; the sequence is ALMGPAFIAAIGYIDPGNFA. The Periplasmic portion of the chain corresponds to 40–51; it reads TNIQAGASFGYQ. Residues 52–71 form a helical membrane-spanning segment; sequence LLWVVVWANLMAMLIQILSA. At 72-95 the chain is on the cytoplasmic side; it reads KLGIATGKNLAEQIRDHYPRPVVW. Residues 96-118 form a helical membrane-spanning segment; that stretch reads FYWVQAEIIAMATDLAEFIGAAI. The Periplasmic segment spans residues 119 to 125; the sequence is GFKLILG. The helical transmembrane segment at 126–145 threads the bilayer; it reads VSLLQGAVLTGIATFLILML. The Cytoplasmic portion of the chain corresponds to 146-155; it reads QRRGQKPLEK. The helical transmembrane segment at 156 to 175 threads the bilayer; sequence VIGGLLLFVAAAYIVELFFS. Residues 176 to 196 lie on the Periplasmic side of the membrane; sequence QPDMAQLGKGMVIPALPNPEA. A helical membrane pass occupies residues 197-220; sequence VFLAAGVLGATIMPHVIYLHSSLT. The Cytoplasmic portion of the chain corresponds to 221 to 238; the sequence is QHLHGGTRQQRYSATKWD. A helical membrane pass occupies residues 239–258; the sequence is VAIAMTIAGFVNLAMMATAA. Topologically, residues 259 to 276 are periplasmic; sequence AAFHFSGHTGIADLDQAY. Residues 277 to 297 traverse the membrane as a helical segment; it reads LTLEPLLSHAAATVFGLSLVA. The Cytoplasmic portion of the chain corresponds to 298-327; the sequence is AGLSSTVVGTLAGQVVMQGFVRFHIPLWVR. The helical transmembrane segment at 328–344 threads the bilayer; it reads RTITMLPSFIVILMGLD. At 345-350 the chain is on the periplasmic side; sequence PTRILV. Residues 351 to 370 form a helical membrane-spanning segment; sequence MSQVLLSFGIALALVPLLIF. At 371–387 the chain is on the cytoplasmic side; the sequence is TSNATLMGELVNTRRVK. A helical membrane pass occupies residues 388 to 406; that stretch reads QVGWIIVVLVVALNIWLLV. The Periplasmic portion of the chain corresponds to 407 to 413; sequence GTVMGLS.

The protein belongs to the NRAMP family.

Its subcellular location is the cell inner membrane. H(+)-stimulated, divalent metal cation uptake system. This Salmonella paratyphi C (strain RKS4594) protein is Divalent metal cation transporter MntH.